The following is a 211-amino-acid chain: DNA/RNA-binding protein ALBA2 (211 aa).

Residues 84-99 (NSGLKKNAKNEDKKSG) are compositionally biased toward basic and acidic residues. The segment at 84–121 (NSGLKKNAKNEDKKSGDEEEEEEEEEEDEENNKNKEAN) is disordered. Positions 100–113 (DEEEEEEEEEEDEE) are enriched in acidic residues.

It belongs to the histone-like Alba family. As to quaternary structure, identified in a TARE6-associated complex consisting of over 30 proteins and including ALBA1, ALBA2 and ALBA4; the complex binds to the non-coding subtelomeric repeat region TARE6.

The protein localises to the nucleus. Its subcellular location is the chromosome. It is found in the telomere. It localises to the cytoplasm. Its function is as follows. Possesses DNA- and RNA-binding activities. Binds to DNA with relaxed sequence specificity. Associates with the subtelomeric TARE6 repeats. This chain is DNA/RNA-binding protein ALBA2, found in Plasmodium falciparum (isolate 3D7).